Consider the following 227-residue polypeptide: Ribose-5-phosphate isomerase A (227 aa).

Substrate is bound by residues 26–29 (TGST), 82–85 (DGAD), and 95–98 (KGGG). Glutamate 104 serves as the catalytic Proton acceptor. Lysine 122 contributes to the substrate binding site.

It belongs to the ribose 5-phosphate isomerase family. As to quaternary structure, homodimer.

The catalysed reaction is aldehydo-D-ribose 5-phosphate = D-ribulose 5-phosphate. It participates in carbohydrate degradation; pentose phosphate pathway; D-ribose 5-phosphate from D-ribulose 5-phosphate (non-oxidative stage): step 1/1. In terms of biological role, catalyzes the reversible conversion of ribose-5-phosphate to ribulose 5-phosphate. The protein is Ribose-5-phosphate isomerase A of Streptococcus pneumoniae (strain ATCC 700669 / Spain 23F-1).